We begin with the raw amino-acid sequence, 126 residues long: MASQTQGIQQLLAAEKRAAEKINEARKRKLQRTKQAKQEAQAEVEKYKQQREAEFKAFEQQYLGTKEDIESKIRRDTEDQISGMKQSVAGNKQAVIVRLLQLVCDIKPELHHNLTLQKKLHGQFAA.

It belongs to the V-ATPase G subunit family. V-ATPase is a heteromultimeric enzyme made up of two complexes: the ATP-hydrolytic V1 complex and the proton translocation V0 complex. The V1 complex consists of three catalytic AB heterodimers that form a heterohexamer, three peripheral stalks each consisting of EG heterodimers, one central rotor including subunits D and F, and the regulatory subunits C and H. The proton translocation complex V0 consists of the proton transport subunit a, a ring of proteolipid subunits c9c'', rotary subunit d, subunits e and f, and the accessory subunits vah-19/Ac45 and vah-20/PRR. Interacts with ced-1.

In terms of biological role, subunit of the V1 complex of vacuolar(H+)-ATPase (V-ATPase), a multisubunit enzyme composed of a peripheral complex (V1) that hydrolyzes ATP and a membrane integral complex (V0) that translocates protons. V-ATPase is responsible for acidifying and maintaining the pH of intracellular compartments and in some cell types, is targeted to the plasma membrane, where it is responsible for acidifying the extracellular environment. In neurons, required for necrotic cell death by promoting intracellular acidification. This chain is Probable V-type proton ATPase subunit G, found in Caenorhabditis elegans.